Here is a 418-residue protein sequence, read N- to C-terminus: UDP-N-acetylglucosamine 1-carboxyvinyltransferase (418 aa).

22–23 contributes to the phosphoenolpyruvate binding site; that stretch reads KN. UDP-N-acetyl-alpha-D-glucosamine is bound at residue Arg92. Catalysis depends on Cys116, which acts as the Proton donor. Position 116 is a 2-(S-cysteinyl)pyruvic acid O-phosphothioketal (Cys116). UDP-N-acetyl-alpha-D-glucosamine is bound by residues 121 to 125, Asp305, and Leu327; that span reads RPIDL.

The protein belongs to the EPSP synthase family. MurA subfamily.

Its subcellular location is the cytoplasm. The catalysed reaction is phosphoenolpyruvate + UDP-N-acetyl-alpha-D-glucosamine = UDP-N-acetyl-3-O-(1-carboxyvinyl)-alpha-D-glucosamine + phosphate. It functions in the pathway cell wall biogenesis; peptidoglycan biosynthesis. In terms of biological role, cell wall formation. Adds enolpyruvyl to UDP-N-acetylglucosamine. The chain is UDP-N-acetylglucosamine 1-carboxyvinyltransferase from Campylobacter jejuni (strain RM1221).